Consider the following 322-residue polypeptide: Probable 2-oxoglutarate-dependent dioxygenase AOP1 (322 aa).

The Fe2OG dioxygenase domain maps to 165 to 271; the sequence is TYYLTRLMKY…RYSTGLFSIP (107 aa). H195, D197, and H252 together coordinate Fe cation. R262 lines the 2-oxoglutarate pocket.

Belongs to the iron/ascorbate-dependent oxidoreductase family. Fe(2+) serves as cofactor.

Probable 2-oxoglutarate-dependent dioxygenase that may be involved in glucosinolates biosynthesis. May play a role in the production of aliphatic glucosinolates. The protein is Probable 2-oxoglutarate-dependent dioxygenase AOP1 (AOP1) of Arabidopsis thaliana (Mouse-ear cress).